We begin with the raw amino-acid sequence, 347 residues long: MCTKMEQPFYHDDSYTATGYGRAPGGLSLHDYKLLKPSLAVNLADPYRSLKAPGARGPGPEGGGGGSYFSGQGSDTGASLKLASSELERLIVPNSNGVITTTPTPPGQYFYPRGGGSGGGAGGAGGGVTEEQEGFADGFVKALDDLHKMNHVTPPNVSLGATGGPPAGPGGVYAGPEPPPVYTNLSSYSPASASSGGAGAAVGTGSSYPTTTISYLPHAPPFAGGHPAQLGLGRGASTFKEEPQTVPEARSRDATPPVSPINMEDQERIKVERKRLRNRLAATKCRKRKLERIARLEDKVKTLKAENAGLSSTAGLLREQVAQLKQKVMTHVSNGCQLLLGVKGHAF.

Residues Lys-4, Lys-33, and Lys-36 each participate in a glycyl lysine isopeptide (Lys-Gly) (interchain with G-Cter in SUMO2) cross-link. Positions 51–73 (KAPGARGPGPEGGGGGSYFSGQG) are disordered. Residues 56–68 (RGPGPEGGGGGSY) show a composition bias toward gly residues. A Glycyl lysine isopeptide (Lys-Gly) (interchain with G-Cter in SUMO2) cross-link involves residue Lys-81. A phosphothreonine mark is found at Thr-102 and Thr-104. Ser-117 is modified (phosphoserine). Lys-141 participates in a covalent cross-link: Glycyl lysine isopeptide (Lys-Gly) (interchain with G-Cter in SUMO2). A compositionally biased stretch (basic and acidic residues) spans 239-253 (FKEEPQTVPEARSRD). A disordered region spans residues 239-260 (FKEEPQTVPEARSRDATPPVSP). The residue at position 240 (Lys-240) is an N6-acetyllysine; alternate. Lys-240 is covalently cross-linked (Glycyl lysine isopeptide (Lys-Gly) (interchain with G-Cter in SUMO1); alternate). Lys-240 is covalently cross-linked (Glycyl lysine isopeptide (Lys-Gly) (interchain with G-Cter in SUMO2); alternate). Phosphoserine is present on Ser-251. Thr-255 carries the post-translational modification Phosphothreonine. A Phosphoserine modification is found at Ser-259. The basic motif stretch occupies residues 268 to 295 (RIKVERKRLRNRLAATKCRKRKLERIAR). The 64-residue stretch at 268 to 331 (RIKVERKRLR…AQLKQKVMTH (64 aa)) folds into the bZIP domain. The interval 296 to 324 (LEDKVKTLKAENAGLSSTAGLLREQVAQL) is leucine-zipper. Lys-343 participates in a covalent cross-link: Glycyl lysine isopeptide (Lys-Gly) (interchain with G-Cter in SUMO2).

It belongs to the bZIP family. Jun subfamily. In terms of assembly, binds DNA as a homodimer or as a heterodimer with another member of the Jun/Fos family. Component of an AP-1 transcription factor complex composed of JUN-FOS heterodimers composed of JUN-FOS heterodimers. As part of the AP-1 transcription factor complex, forms heterodimers with FOSB, thereby binding to the AP-1 consensus sequence and stimulating transcription. Interacts with ITCH (via its WW domains). Ubiquitinated by ITCH, leading to its degradation.

It localises to the nucleus. Its function is as follows. Transcription factor involved in regulating gene activity following the primary growth factor response. Binds to the DNA sequence 5'-TGA[GC]TCA-3'. Heterodimerizes with proteins of the FOS family to form an AP-1 transcription complex, thereby enhancing its DNA binding activity to an AP-1 consensus sequence and its transcriptional activity. This Homo sapiens (Human) protein is Transcription factor JunB (JUNB).